Reading from the N-terminus, the 100-residue chain is Integration host factor subunit alpha (100 aa).

Residues 54–73 are disordered; the sequence is DLRDKRQRPGRNPKTGEEIP.

It belongs to the bacterial histone-like protein family. As to quaternary structure, heterodimer of an alpha and a beta chain.

Its function is as follows. This protein is one of the two subunits of integration host factor, a specific DNA-binding protein that functions in genetic recombination as well as in transcriptional and translational control. The chain is Integration host factor subunit alpha from Pseudomonas savastanoi pv. phaseolicola (strain 1448A / Race 6) (Pseudomonas syringae pv. phaseolicola (strain 1448A / Race 6)).